We begin with the raw amino-acid sequence, 1171 residues long: DNA-directed RNA polymerase subunit beta (1171 aa).

It belongs to the RNA polymerase beta chain family. In terms of assembly, the RNAP catalytic core consists of 2 alpha, 1 beta, 1 beta' and 1 omega subunit. When a sigma factor is associated with the core the holoenzyme is formed, which can initiate transcription.

It catalyses the reaction RNA(n) + a ribonucleoside 5'-triphosphate = RNA(n+1) + diphosphate. Functionally, DNA-dependent RNA polymerase catalyzes the transcription of DNA into RNA using the four ribonucleoside triphosphates as substrates. In Corynebacterium efficiens (strain DSM 44549 / YS-314 / AJ 12310 / JCM 11189 / NBRC 100395), this protein is DNA-directed RNA polymerase subunit beta.